We begin with the raw amino-acid sequence, 502 residues long: Cysteine protease RavZ (502 aa).

Short sequence motifs (LIR) lie at residues 9–23 and 23–37; these read DKLIVDEFEELGEQE and ESDIDEFDLLEGDEK. The catalytic region stretch occupies residues 49–325; that stretch reads SIYPPETSWE…ESALTEGKTL (277 aa). Catalysis depends on residues His-176 and Asp-197. The alpha-3 helix stretch occupies residues 211 to 217; that stretch reads YFKGKYR. The active site involves Cys-258. The membrane targeting region stretch occupies residues 326 to 431; the sequence is PVQLSEFIVA…VLPCVKFDDT (106 aa). The LIR 3 signature appears at 429–443; the sequence is DDTIDDFVTIEKDEL.

The protein resides in the secreted. It localises to the host cytoplasmic vesicle membrane. It carries out the reaction [protein]-C-terminal L-amino acid-glycyl-phosphatidylethanolamide + H2O = a 1,2-diacyl-sn-glycero-3-phosphoethanolamine-N-glycine + [protein]-C-terminal &lt;stereo&gt;L-&lt;/stereo&gt;amino acid. The catalysed reaction is [protein]-C-terminal L-amino acid-glycyl-phosphatidylserine + H2O = 1,2-diacyl-sn-glycero-3-phospho-L-serine-N-glycine + [protein]-C-terminal &lt;stereo&gt;L-&lt;/stereo&gt;amino acid. Its function is as follows. Cysteine protease effector that inhibits host cell autophagy by targeting lipid-conjugated ATG8 family proteins on pre-autophagosomal structures. Specifically hydrolyzes the amide bond between the C-terminal glycine residue and an adjacent aromatic residue in ATG8 proteins conjugated to phosphatidylethanolamine (PE), producing an ATG8 protein that cannot be reconjugated by host ATG7 and ATG3. Mechanistically, Ravz interacts with ATG8 proteins conjugated to PE via its LIR motifs, extracts them from the membrane of autophagosomes and integrates the PE part into its own lipid-binding site. It then removes the lipid component of the ATG8 protein. Also able to mediate delipidation of ATG8 proteins conjugated to phosphatidylserine (PS) during non-canonical autophagy. Inhibits host ubiquitin recruitment to bacteria-containing vacuoles, suggesting that it is able to mediate delipidation of other proteins in addition to ATG8 proteins. It is however not involved in the exclusion of autophagy adapters from bacteria-containing vacuoles decorated with ubiquitin. This Legionella pneumophila subsp. pneumophila (strain Philadelphia 1 / ATCC 33152 / DSM 7513) protein is Cysteine protease RavZ.